Here is a 445-residue protein sequence, read N- to C-terminus: Nuclear envelope integral membrane protein 1 (445 aa).

The signal sequence occupies residues 1–44 (MAGGMKVAVLPAVGAGPWSWGAGGCGAVRLLLVLFGCFVCGSAG). The N-linked (GlcNAc...) asparagine glycan is linked to Asn125. The next 5 helical transmembrane spans lie at 161 to 181 (PKLF…DLLS), 186 to 206 (FYYS…IIFI), 216 to 236 (PIYI…QLVF), 245 to 265 (CYWQ…FAVC), and 289 to 309 (LCFM…VVIA). The a; required for its colocalization with lamins at the nuclear envelope stretch occupies residues 186-297 (FYYSTGMSVG…GLCFMYSSIQ (112 aa)). Positions 336-405 (TVPPRLLTEE…LTPNEVSVHE (70 aa)) are b; required for interaction with RAN-GTP. The segment at 336 to 445 (TVPPRLLTEE…LVVQQNSFLT (110 aa)) is required for nuclear localization. A phosphoserine mark is found at Ser368, Ser424, and Ser425. The segment covering 418–430 (ELSEETSSEEEDS) has biased composition (acidic residues). The disordered stretch occupies residues 418-445 (ELSEETSSEEEDSDSRYPLVVQQNSFLT).

The protein belongs to the NEMP family. Homooligomer. Interacts with RAN-GTP. Interacts with EMD. Phosphorylation may regulate its interaction with RAN-GTP.

It localises to the nucleus inner membrane. The protein localises to the nucleus envelope. Functionally, together with EMD, contributes to nuclear envelope stiffness in germ cells. Required for female fertility. Essential for normal erythropoiesis. Required for efficient nuclear envelope opening and enucleation during the late stages of erythroblast maturation. The chain is Nuclear envelope integral membrane protein 1 (NEMP1) from Bos taurus (Bovine).